A 587-amino-acid chain; its full sequence is Glutamine--tRNA ligase (587 aa).

A 'HIGH' region motif is present at residues 58–68; it reads PEPNGYLHIGH. ATP-binding positions include 59 to 61 and 65 to 71; these read EPN and HIGHAKS. Asp91 and Tyr240 together coordinate L-glutamine. Residues Thr259 and 294–295 contribute to the ATP site; that span reads RL. A 'KMSKS' region motif is present at residues 301–305; it reads VTSKR.

It belongs to the class-I aminoacyl-tRNA synthetase family. Monomer.

The protein localises to the cytoplasm. It carries out the reaction tRNA(Gln) + L-glutamine + ATP = L-glutaminyl-tRNA(Gln) + AMP + diphosphate. The chain is Glutamine--tRNA ligase from Bordetella parapertussis (strain 12822 / ATCC BAA-587 / NCTC 13253).